Reading from the N-terminus, the 73-residue chain is NAD(P)H-quinone oxidoreductase subunit L (73 aa).

2 helical membrane-spanning segments follow: residues Leu-7–Phe-27 and Val-44–Met-64.

This sequence belongs to the complex I NdhL subunit family. In terms of assembly, NDH-1 can be composed of about 15 different subunits; different subcomplexes with different compositions have been identified which probably have different functions.

It localises to the cellular thylakoid membrane. It catalyses the reaction a plastoquinone + NADH + (n+1) H(+)(in) = a plastoquinol + NAD(+) + n H(+)(out). The enzyme catalyses a plastoquinone + NADPH + (n+1) H(+)(in) = a plastoquinol + NADP(+) + n H(+)(out). Functionally, NDH-1 shuttles electrons from an unknown electron donor, via FMN and iron-sulfur (Fe-S) centers, to quinones in the respiratory and/or the photosynthetic chain. The immediate electron acceptor for the enzyme in this species is believed to be plastoquinone. Couples the redox reaction to proton translocation, and thus conserves the redox energy in a proton gradient. Cyanobacterial NDH-1 also plays a role in inorganic carbon-concentration. The sequence is that of NAD(P)H-quinone oxidoreductase subunit L from Synechococcus sp. (strain JA-3-3Ab) (Cyanobacteria bacterium Yellowstone A-Prime).